A 62-amino-acid chain; its full sequence is Large ribosomal subunit protein bL28 (62 aa).

Belongs to the bacterial ribosomal protein bL28 family.

In Streptococcus gordonii (strain Challis / ATCC 35105 / BCRC 15272 / CH1 / DL1 / V288), this protein is Large ribosomal subunit protein bL28.